Reading from the N-terminus, the 73-residue chain is Translational regulator CsrA (73 aa).

Belongs to the CsrA/RsmA family. Homodimer; the beta-strands of each monomer intercalate to form a hydrophobic core, while the alpha-helices form wings that extend away from the core.

It localises to the cytoplasm. A translational regulator that binds mRNA to regulate translation initiation and/or mRNA stability. Usually binds in the 5'-UTR at or near the Shine-Dalgarno sequence preventing ribosome-binding, thus repressing translation. Its main target seems to be the major flagellin gene, while its function is anatagonized by FliW. The sequence is that of Translational regulator CsrA from Clostridium kluyveri (strain NBRC 12016).